Reading from the N-terminus, the 250-residue chain is Heme oxygenase 2 (250 aa).

H16 provides a ligand contact to heme b. A disordered region spans residues 228-250 (QDRPGSTEARSTAGHPITLMVGE).

The protein belongs to the heme oxygenase family. In terms of assembly, homodimer.

It carries out the reaction heme b + 3 reduced [NADPH--hemoprotein reductase] + 3 O2 = biliverdin IXalpha + CO + Fe(2+) + 3 oxidized [NADPH--hemoprotein reductase] + 3 H2O + H(+). Functionally, catalyzes the opening of the heme ring with the release of iron. Key enzyme in the synthesis of the chromophoric part of the photosynthetic antennae. The sequence is that of Heme oxygenase 2 (pbsA2) from Synechocystis sp. (strain ATCC 27184 / PCC 6803 / Kazusa).